Consider the following 270-residue polypeptide: Putative phosphoenolpyruvate synthase regulatory protein (270 aa).

Residue 150–157 (GVSRCGKT) participates in ADP binding.

The protein belongs to the pyruvate, phosphate/water dikinase regulatory protein family. PSRP subfamily.

The catalysed reaction is [pyruvate, water dikinase] + ADP = [pyruvate, water dikinase]-phosphate + AMP + H(+). The enzyme catalyses [pyruvate, water dikinase]-phosphate + phosphate + H(+) = [pyruvate, water dikinase] + diphosphate. In terms of biological role, bifunctional serine/threonine kinase and phosphorylase involved in the regulation of the phosphoenolpyruvate synthase (PEPS) by catalyzing its phosphorylation/dephosphorylation. In Shewanella loihica (strain ATCC BAA-1088 / PV-4), this protein is Putative phosphoenolpyruvate synthase regulatory protein.